Consider the following 128-residue polypeptide: MYLNQRIKFFLERVVRMMDENRSKGNRWGVWAFFGILLVPLLVPLLCCAGPILLVALGSTGIGALFAGATGNWWLTGIFAALAIVMIALILSKLLKNKYNSPEGNGKTKNKTDCCTPPESVDRKHETR.

Transmembrane regions (helical) follow at residues 28–48 (WGVW…LLCC) and 71–91 (GNWW…ALIL). The Hg(2+) site is built by Cys47 and Cys48. The disordered stretch occupies residues 101-128 (SPEGNGKTKNKTDCCTPPESVDRKHETR). Positions 114 and 115 each coordinate Hg(2+).

It is found in the cell membrane. Its function is as follows. Involved in mercuric transport. Passes a mercury ion from the MerP protein to the mercuric reductase MerA. The chain is Mercuric transport protein (merT) from Staphylococcus aureus.